The following is a 343-amino-acid chain: Dihydroorotate dehydrogenase (quinone) (343 aa).

Residues 58-62 (AGYDK) and S82 each bind FMN. K62 is a binding site for substrate. 107 to 111 (NRMGF) lines the substrate pocket. 2 residues coordinate FMN: N136 and N167. N167 is a binding site for substrate. S170 functions as the Nucleophile in the catalytic mechanism. A substrate-binding site is contributed by N172. FMN contacts are provided by K206 and S234. Residue 235–236 (NT) coordinates substrate. FMN is bound by residues G256, G285, and 306–307 (YS).

Belongs to the dihydroorotate dehydrogenase family. Type 2 subfamily. In terms of assembly, monomer. FMN serves as cofactor.

Its subcellular location is the cell membrane. It carries out the reaction (S)-dihydroorotate + a quinone = orotate + a quinol. Its pathway is pyrimidine metabolism; UMP biosynthesis via de novo pathway; orotate from (S)-dihydroorotate (quinone route): step 1/1. Functionally, catalyzes the conversion of dihydroorotate to orotate with quinone as electron acceptor. The polypeptide is Dihydroorotate dehydrogenase (quinone) (Erythrobacter litoralis (strain HTCC2594)).